The following is a 172-amino-acid chain: Chromosome-anchoring protein RacA (172 aa).

Positions Thr5 to Lys25 form a DNA-binding region, H-T-H motif. Disordered regions lie at residues Ala57 to Ile76 and Gln142 to Ala172. The segment covering Pro62 to Pro71 has biased composition (pro residues). Positions Glu83 to Arg146 form a coiled coil. The span at Gln142 to His151 shows a compositional bias: polar residues.

It belongs to the RacA family.

The protein resides in the cytoplasm. Functionally, required for the formation of axial filaments and for anchoring the origin regions at the cell poles in sporulating cells, thus ensuring proper chromosome segregation in the prespore. Binds in a dispersed manner throughout the chromosome but preferentially to sites clustered in the origin portion of the chromosome, causing condensation of the chromosome and its remodeling into an elongated, anchored structure. This Geobacillus kaustophilus (strain HTA426) protein is Chromosome-anchoring protein RacA.